The chain runs to 169 residues: S-ribosylhomocysteine lyase (169 aa).

Fe cation is bound by residues H54, H58, and C129.

Belongs to the LuxS family. In terms of assembly, homodimer. It depends on Fe cation as a cofactor.

The enzyme catalyses S-(5-deoxy-D-ribos-5-yl)-L-homocysteine = (S)-4,5-dihydroxypentane-2,3-dione + L-homocysteine. Involved in the synthesis of autoinducer 2 (AI-2) which is secreted by bacteria and is used to communicate both the cell density and the metabolic potential of the environment. The regulation of gene expression in response to changes in cell density is called quorum sensing. Catalyzes the transformation of S-ribosylhomocysteine (RHC) to homocysteine (HC) and 4,5-dihydroxy-2,3-pentadione (DPD). The sequence is that of S-ribosylhomocysteine lyase from Glaesserella parasuis serovar 5 (strain SH0165) (Haemophilus parasuis).